A 159-amino-acid polypeptide reads, in one-letter code: ATP synthase subunit b 2 (159 aa).

The helical transmembrane segment at 1 to 21 threads the bilayer; the sequence is MDATFWAFIALVIFVAIVVYM.

It belongs to the ATPase B chain family. As to quaternary structure, F-type ATPases have 2 components, F(1) - the catalytic core - and F(0) - the membrane proton channel. F(1) has five subunits: alpha(3), beta(3), gamma(1), delta(1), epsilon(1). F(0) has three main subunits: a(1), b(2) and c(10-14). The alpha and beta chains form an alternating ring which encloses part of the gamma chain. F(1) is attached to F(0) by a central stalk formed by the gamma and epsilon chains, while a peripheral stalk is formed by the delta and b chains.

Its subcellular location is the cell inner membrane. In terms of biological role, f(1)F(0) ATP synthase produces ATP from ADP in the presence of a proton or sodium gradient. F-type ATPases consist of two structural domains, F(1) containing the extramembraneous catalytic core and F(0) containing the membrane proton channel, linked together by a central stalk and a peripheral stalk. During catalysis, ATP synthesis in the catalytic domain of F(1) is coupled via a rotary mechanism of the central stalk subunits to proton translocation. Its function is as follows. Component of the F(0) channel, it forms part of the peripheral stalk, linking F(1) to F(0). The protein is ATP synthase subunit b 2 of Brucella abortus (strain S19).